Consider the following 195-residue polypeptide: Pyridoxal 5'-phosphate synthase subunit PdxT (195 aa).

Gly46–Ser48 contacts L-glutamine. The Nucleophile role is filled by Cys78. L-glutamine is bound by residues Arg105 and Ile133–Arg134. Catalysis depends on charge relay system residues His169 and Glu171.

It belongs to the glutaminase PdxT/SNO family. In the presence of PdxS, forms a dodecamer of heterodimers. Only shows activity in the heterodimer.

It catalyses the reaction aldehydo-D-ribose 5-phosphate + D-glyceraldehyde 3-phosphate + L-glutamine = pyridoxal 5'-phosphate + L-glutamate + phosphate + 3 H2O + H(+). The enzyme catalyses L-glutamine + H2O = L-glutamate + NH4(+). The protein operates within cofactor biosynthesis; pyridoxal 5'-phosphate biosynthesis. In terms of biological role, catalyzes the hydrolysis of glutamine to glutamate and ammonia as part of the biosynthesis of pyridoxal 5'-phosphate. The resulting ammonia molecule is channeled to the active site of PdxS. The protein is Pyridoxal 5'-phosphate synthase subunit PdxT of Shouchella clausii (strain KSM-K16) (Alkalihalobacillus clausii).